Here is a 478-residue protein sequence, read N- to C-terminus: Protein nucleotidyltransferase YdiU (478 aa).

ATP contacts are provided by G84, G86, R87, K107, D119, G120, R170, and R177. D246 acts as the Proton acceptor in catalysis. Residues N247 and D256 each coordinate Mg(2+). Residue D256 participates in ATP binding.

It belongs to the SELO family. Mg(2+) serves as cofactor. The cofactor is Mn(2+).

It catalyses the reaction L-seryl-[protein] + ATP = 3-O-(5'-adenylyl)-L-seryl-[protein] + diphosphate. It carries out the reaction L-threonyl-[protein] + ATP = 3-O-(5'-adenylyl)-L-threonyl-[protein] + diphosphate. The catalysed reaction is L-tyrosyl-[protein] + ATP = O-(5'-adenylyl)-L-tyrosyl-[protein] + diphosphate. The enzyme catalyses L-histidyl-[protein] + UTP = N(tele)-(5'-uridylyl)-L-histidyl-[protein] + diphosphate. It catalyses the reaction L-seryl-[protein] + UTP = O-(5'-uridylyl)-L-seryl-[protein] + diphosphate. It carries out the reaction L-tyrosyl-[protein] + UTP = O-(5'-uridylyl)-L-tyrosyl-[protein] + diphosphate. In terms of biological role, nucleotidyltransferase involved in the post-translational modification of proteins. It can catalyze the addition of adenosine monophosphate (AMP) or uridine monophosphate (UMP) to a protein, resulting in modifications known as AMPylation and UMPylation. This Escherichia coli O139:H28 (strain E24377A / ETEC) protein is Protein nucleotidyltransferase YdiU.